The sequence spans 500 residues: Lysine--tRNA ligase (500 aa).

The Mg(2+) site is built by E410 and E417.

The protein belongs to the class-II aminoacyl-tRNA synthetase family. Homodimer. Mg(2+) is required as a cofactor.

It is found in the cytoplasm. The enzyme catalyses tRNA(Lys) + L-lysine + ATP = L-lysyl-tRNA(Lys) + AMP + diphosphate. The chain is Lysine--tRNA ligase from Shewanella sediminis (strain HAW-EB3).